We begin with the raw amino-acid sequence, 137 residues long: NADH-quinone oxidoreductase subunit A 1 (137 aa).

The next 3 helical transmembrane spans lie at Phe-14–Leu-34, Phe-66–Trp-86, and Trp-95–Leu-115.

The protein belongs to the complex I subunit 3 family. As to quaternary structure, NDH-1 is composed of 13 different subunits. Subunits NuoA, H, J, K, L, M, N constitute the membrane sector of the complex.

It localises to the cell inner membrane. It carries out the reaction a quinone + NADH + 5 H(+)(in) = a quinol + NAD(+) + 4 H(+)(out). Functionally, NDH-1 shuttles electrons from NADH, via FMN and iron-sulfur (Fe-S) centers, to quinones in the respiratory chain. The immediate electron acceptor for the enzyme in this species is believed to be ubiquinone. Couples the redox reaction to proton translocation (for every two electrons transferred, four hydrogen ions are translocated across the cytoplasmic membrane), and thus conserves the redox energy in a proton gradient. The polypeptide is NADH-quinone oxidoreductase subunit A 1 (Pseudomonas paraeruginosa (strain DSM 24068 / PA7) (Pseudomonas aeruginosa (strain PA7))).